Here is a 270-residue protein sequence, read N- to C-terminus: 3-phenylpropionate-dihydrodiol/cinnamic acid-dihydrodiol dehydrogenase (270 aa).

10 to 34 (FITGGGSGLGLALVERFIEEGAQVA) serves as a coordination point for NAD(+). Serine 143 contacts substrate. The Proton acceptor role is filled by tyrosine 156.

The protein belongs to the short-chain dehydrogenases/reductases (SDR) family.

The catalysed reaction is 3-(cis-5,6-dihydroxycyclohexa-1,3-dien-1-yl)propanoate + NAD(+) = 3-(2,3-dihydroxyphenyl)propanoate + NADH + H(+). It carries out the reaction (2E)-3-(cis-5,6-dihydroxycyclohexa-1,3-dien-1-yl)prop-2-enoate + NAD(+) = (2E)-3-(2,3-dihydroxyphenyl)prop-2-enoate + NADH + H(+). It participates in aromatic compound metabolism; 3-phenylpropanoate degradation. Functionally, converts 3-phenylpropionate-dihydrodiol (PP-dihydrodiol) and cinnamic acid-dihydrodiol (CI-dihydrodiol) into 3-(2,3-dihydroxylphenyl)propanoic acid (DHPP) and 2,3-dihydroxicinnamic acid (DHCI), respectively. The sequence is that of 3-phenylpropionate-dihydrodiol/cinnamic acid-dihydrodiol dehydrogenase from Shigella sonnei (strain Ss046).